The following is a 508-amino-acid chain: Matrix metalloproteinase-19 (508 aa).

Residues 1-18 form the signal peptide; it reads MNCQQLWLGFLLPMTVSG. Positions 19-97 are excised as a propeptide; it reads RVLGLAEVAP…EDPFNQKTLK (79 aa). A Cysteine switch motif is present at residues 83–90; the sequence is PRCGLEDP. The Zn(2+) site is built by Cys85 and His212. Glu213 is a catalytic residue. The Zn(2+) site is built by His216 and His222. The interval 262-288 is disordered; that stretch reads IRDEEEEETELPTVPPVPTEPSPMPDP. Over residues 274–287 the composition is skewed to pro residues; the sequence is TVPPVPTEPSPMPD. Hemopexin repeat units follow at residues 286 to 333, 334 to 380, 381 to 425, and 426 to 472; these read PDPC…WEGL, PGNL…EPNL, DAAL…FTGV, and PNQP…WMHC. A disulfide bond links Cys289 and Cys472. The N-linked (GlcNAc...) asparagine glycan is linked to Asn464.

The protein belongs to the peptidase M10A family. Zn(2+) serves as cofactor. The cofactor is Ca(2+). Post-translationally, activated by autolytic cleavage after Lys-97. In terms of processing, tyrosine phosphorylated by PKDCC/VLK. In terms of tissue distribution, expressed in mammary gland, placenta, lung, pancreas, ovary, small intestine, spleen, thymus, prostate, testis colon, heart and blood vessel walls. Not detected in brain and peripheral blood leukocytes. Also expressed in the synovial fluid of normal and rheumatoid patients.

Its subcellular location is the secreted. The protein resides in the extracellular space. It is found in the extracellular matrix. Its activity is regulated as follows. Strongly inhibited by TIMP-2, TIMP-3 and TIMP-4, while TIMP-1 is less efficient. Functionally, endopeptidase that degrades various components of the extracellular matrix, such as aggrecan and cartilage oligomeric matrix protein (comp), during development, haemostasis and pathological conditions (arthritic disease). May also play a role in neovascularization or angiogenesis. Hydrolyzes collagen type IV, laminin, nidogen, nascin-C isoform, fibronectin, and type I gelatin. This Homo sapiens (Human) protein is Matrix metalloproteinase-19 (MMP19).